We begin with the raw amino-acid sequence, 649 residues long: Acetyl-coenzyme A synthetase (649 aa).

Residues 190 to 193 (RGGR) and threonine 310 each bind CoA. ATP-binding positions include 386–388 (GEP), 410–415 (DTWWQT), aspartate 499, and arginine 514. Position 522 (serine 522) interacts with CoA. Arginine 525 contacts ATP. Mg(2+) contacts are provided by valine 536, histidine 538, and valine 541. Arginine 583 serves as a coordination point for CoA. Position 608 is an N6-acetyllysine (lysine 608).

The protein belongs to the ATP-dependent AMP-binding enzyme family. It depends on Mg(2+) as a cofactor. Post-translationally, acetylated. Deacetylation by the SIR2-homolog deacetylase activates the enzyme.

The catalysed reaction is acetate + ATP + CoA = acetyl-CoA + AMP + diphosphate. Catalyzes the conversion of acetate into acetyl-CoA (AcCoA), an essential intermediate at the junction of anabolic and catabolic pathways. AcsA undergoes a two-step reaction. In the first half reaction, AcsA combines acetate with ATP to form acetyl-adenylate (AcAMP) intermediate. In the second half reaction, it can then transfer the acetyl group from AcAMP to the sulfhydryl group of CoA, forming the product AcCoA. The chain is Acetyl-coenzyme A synthetase from Methylorubrum extorquens (strain PA1) (Methylobacterium extorquens).